The sequence spans 427 residues: NADH-quinone oxidoreductase subunit 14 (427 aa).

14 helical membrane passes run 1–21, 30–50, 57–77, 79–99, 104–124, 137–157, 172–192, 204–224, 230–250, 257–277, 280–300, 322–342, 360–380, and 400–420; these read MTLA…FVLP, LLGL…PFAF, GVSQ…VGLV, SGRF…HLLA, LLLM…LATW, FLLG…FYGA, YALA…LAPF, PTPV…AALL, PEAL…AALA, LLAY…YTGN, ALGF…AVLS, LGLA…LAGF, VLVL…GLGL, and AAVV…GLVL.

This sequence belongs to the complex I subunit 2 family. In terms of assembly, NDH-1 is composed of 15 different subunits, Nqo1 to Nqo15. The complex has a L-shaped structure, with the hydrophobic arm (subunits Nqo7, Nqo8 and Nqo10 to Nqo14) embedded in the membrane and the hydrophilic peripheral arm (subunits Nqo1 to Nqo6, Nqo9 and Nqo15) protruding into the bacterial cytoplasm. The hydrophilic domain contains all the redox centers.

The protein localises to the cell inner membrane. The enzyme catalyses a quinone + NADH + 5 H(+)(in) = a quinol + NAD(+) + 4 H(+)(out). NDH-1 shuttles electrons from NADH, via FMN and iron-sulfur (Fe-S) centers, to quinones in the respiratory chain. The immediate electron acceptor for the enzyme in this species is menaquinone. Couples the redox reaction to proton translocation (for every two electrons transferred, four hydrogen ions are translocated across the cytoplasmic membrane), and thus conserves the redox energy in a proton gradient required for the synthesis of ATP. This is NADH-quinone oxidoreductase subunit 14 (nqo14) from Thermus thermophilus (strain ATCC 27634 / DSM 579 / HB8).